Consider the following 428-residue polypeptide: Chaperone SurA (428 aa).

The first 19 residues, 1–19, serve as a signal peptide directing secretion; sequence MNIWKTLLLGMLVTGSAVS. PpiC domains follow at residues 170-268 and 277-377; these read SVEY…KIED and VTEV…EVLD.

The protein resides in the periplasm. It carries out the reaction [protein]-peptidylproline (omega=180) = [protein]-peptidylproline (omega=0). Chaperone involved in the correct folding and assembly of outer membrane proteins. Recognizes specific patterns of aromatic residues and the orientation of their side chains, which are found more frequently in integral outer membrane proteins. May act in both early periplasmic and late outer membrane-associated steps of protein maturation. The sequence is that of Chaperone SurA from Vibrio vulnificus (strain CMCP6).